We begin with the raw amino-acid sequence, 375 residues long: G-protein coupled estrogen receptor 1 (375 aa).

Met1 bears the N-acetylmethionine mark. Residues 1–62 (MAATTPAQDV…QQYVIALFLS (62 aa)) are Extracellular-facing. Asn32 and Asn44 each carry an N-linked (GlcNAc...) asparagine glycan. The helical transmembrane segment at 63-84 (CLYTIFLFPIGFVGNILILVVN) threads the bilayer. At 85–96 (ISFREKMTIPDL) the chain is on the cytoplasmic side. A helical membrane pass occupies residues 97 to 120 (YFINLAAADLILVADSLIEVFNLD). The Extracellular portion of the chain corresponds to 121–132 (EQYYDIAVLCTF). Cysteines 130 and 207 form a disulfide. The chain crosses the membrane as a helical span at residues 133-153 (MSLFLQINMYSSVFFLTWMSF). The Cytoplasmic segment spans residues 154–175 (DRYLALAKAMRCGLFRTKHHAR). A helical membrane pass occupies residues 176 to 194 (LSCGLIWMASVSATLVPFT). Over 195–220 (AVHLRHTEEACFCFADVREVQWLEVT) the chain is Extracellular. A helical membrane pass occupies residues 221–236 (LGFIVPFAIIGLCYSL). Residues 237–259 (IVRALIRAHRHRGLRPRRQKALR) lie on the Cytoplasmic side of the membrane. Residues 260-280 (MIFAVVLVFFICWLPENVFIS) traverse the membrane as a helical segment. Residues 281 to 306 (VHLLQWAQPGDTPCKQSFRHAYPLTG) are Extracellular-facing. The helical transmembrane segment at 307 to 327 (HIVNLAAFSNSCLSPLIYSFL) threads the bilayer. The Cytoplasmic segment spans residues 328 to 375 (GETFRDKLRLYVAQKTSLPALNRFCHATLKAVIPDSTEQSDVKFSSAV).

The protein belongs to the G-protein coupled receptor 1 family. Homodimer. Heterodimer; heterodimerizes with other G-protein-coupled receptor (GPCRs) like CRHR1, HTR1A and PAQR8. Interacts with RAMP3; the interaction confers proper subcellular localization and function in cardioprotection. Interacts with KRT7 and KRT8. Interacts with EGFR; the interaction increases after agonist-induced stimulation in cancer-associated fibroblasts (CAF). Interacts with EGFR and ESR1. Interacts (via C-terminus tail motif) with DLG4 (via N-terminus tandem pair of PDZ domains); the interaction is direct and induces the increase of GPER1 protein levels residing at the plasma membrane surface in a estradiol-independent manner. In terms of processing, ubiquitinated; ubiquitination occurs at the plasma membrane and leads to proteasome-mediated degradation. Post-translationally, glycosylated. Expressed in the brain. Expressed in neurons of the hippocampus, hypothalamic paraventricular nucleus (PVN), supraoptic nucleus (SON) and the median eminence. Expressed in magnocellular neurosecretory cells (MNCs) which secrete oxytocin but not in MNCs which secrete vasopressin. Expressed in glial cells. Expressed in the nucleus ambiguous. Expressed in epithelial cells, in pachytene spermatocytes (PS) (at protein level). Expressed strongly in vascular endothelial cells and poorly in vascular smooth muscle cells (VSMC). Expressed in the brain, lung, pituitary gland, adrenal medulla, renal pelvis and ovary. Expressed in CA1 hippocampus. Expressed weakly in heart, skeletal muscle and kidney.

The protein localises to the nucleus. It localises to the cytoplasm. It is found in the perinuclear region. Its subcellular location is the cytoskeleton. The protein resides in the cytoplasmic vesicle membrane. The protein localises to the cell membrane. It localises to the basolateral cell membrane. It is found in the endoplasmic reticulum membrane. Its subcellular location is the early endosome. The protein resides in the recycling endosome. The protein localises to the golgi apparatus. It localises to the trans-Golgi network. It is found in the golgi apparatus membrane. Its subcellular location is the cell projection. The protein resides in the dendrite. The protein localises to the dendritic spine membrane. It localises to the axon. It is found in the postsynaptic density. Its subcellular location is the mitochondrion membrane. Functionally, G-protein coupled estrogen receptor that binds to 17-beta-estradiol (E2) with high affinity, leading to rapid and transient activation of numerous intracellular signaling pathways. Stimulates cAMP production, calcium mobilization and tyrosine kinase Src inducing the release of heparin-bound epidermal growth factor (HB-EGF) and subsequent transactivation of the epidermal growth factor receptor (EGFR), activating downstream signaling pathways such as PI3K/Akt and ERK/MAPK. Mediates pleiotropic functions among others in the cardiovascular, endocrine, reproductive, immune and central nervous systems. Has a role in cardioprotection by reducing cardiac hypertrophy and perivascular fibrosis in a RAMP3-dependent manner. Regulates arterial blood pressure by stimulating vasodilation and reducing vascular smooth muscle and microvascular endothelial cell proliferation. Plays a role in blood glucose homeostasis contributing to the insulin secretion response by pancreatic beta cells. Triggers mitochondrial apoptosis during pachytene spermatocyte differentiation. Stimulates uterine epithelial cell proliferation. Enhances uterine contractility in response to oxytocin. Contributes to thymic atrophy by inducing apoptosis. Attenuates TNF-mediated endothelial expression of leukocyte adhesion molecules. Promotes neuritogenesis in developing hippocampal neurons. Plays a role in acute neuroprotection against NMDA-induced excitotoxic neuronal death. Increases firing activity and intracellular calcium oscillations in luteinizing hormone-releasing hormone (LHRH) neurons. Inhibits early osteoblast proliferation at growth plate during skeletal development. Inhibits mature adipocyte differentiation and lipid accumulation. Involved in the recruitment of beta-arrestin 2 ARRB2 at the plasma membrane in epithelial cells. Also functions as a receptor for aldosterone mediating rapid regulation of vascular contractibility through the PI3K/ERK signaling pathway. Involved in cancer progression regulation. Stimulates cancer-associated fibroblast (CAF) proliferation by a rapid genomic response through the EGFR/ERK transduction pathway. Associated with EGFR, may act as a transcription factor activating growth regulatory genes (c-fos, cyclin D1). Promotes integrin alpha-5/beta-1 and fibronectin (FN) matrix assembly in breast cancer cells. The sequence is that of G-protein coupled estrogen receptor 1 (Gper1) from Rattus norvegicus (Rat).